We begin with the raw amino-acid sequence, 594 residues long: UvrABC system protein C (594 aa).

The region spanning 14–91 is the GIY-YIG domain; the sequence is DSPGCYLHKD…IQENMPKYNI (78 aa). Residues 196–231 enclose the UVR domain; that stretch reads DKIIDDLRSKMLEASNKQEFERAAEYRDLISGIATM.

This sequence belongs to the UvrC family. As to quaternary structure, interacts with UvrB in an incision complex.

It localises to the cytoplasm. The UvrABC repair system catalyzes the recognition and processing of DNA lesions. UvrC both incises the 5' and 3' sides of the lesion. The N-terminal half is responsible for the 3' incision and the C-terminal half is responsible for the 5' incision. The polypeptide is UvrABC system protein C (Streptococcus equi subsp. zooepidemicus (strain MGCS10565)).